The chain runs to 423 residues: Probable multifunctional protein ADE2 (423 aa).

The SAICAR synthetase stretch occupies residues 1-263 (MSSLAEIASR…KVMDITATFS (263 aa)). Residues 264 to 423 (KHQQKCHVLV…NIYNANRKLE (160 aa)) are AIR carboxylase.

The protein in the N-terminal section; belongs to the SAICAR synthetase family. It in the C-terminal section; belongs to the AIR carboxylase family. Class II subfamily.

The catalysed reaction is 5-amino-1-(5-phospho-D-ribosyl)imidazole-4-carboxylate + L-aspartate + ATP = (2S)-2-[5-amino-1-(5-phospho-beta-D-ribosyl)imidazole-4-carboxamido]succinate + ADP + phosphate + 2 H(+). The enzyme catalyses 5-amino-1-(5-phospho-D-ribosyl)imidazole-4-carboxylate + H(+) = 5-amino-1-(5-phospho-beta-D-ribosyl)imidazole + CO2. Its pathway is purine metabolism; IMP biosynthesis via de novo pathway; 5-amino-1-(5-phospho-D-ribosyl)imidazole-4-carboxamide from 5-amino-1-(5-phospho-D-ribosyl)imidazole-4-carboxylate: step 1/2. It functions in the pathway purine metabolism; IMP biosynthesis via de novo pathway; 5-amino-1-(5-phospho-D-ribosyl)imidazole-4-carboxylate from 5-amino-1-(5-phospho-D-ribosyl)imidazole (carboxylase route): step 1/1. The polypeptide is Probable multifunctional protein ADE2 (Caenorhabditis elegans).